The sequence spans 87 residues: Large ribosomal subunit protein bL27 (87 aa).

A disordered region spans residues 1-24 (MAHKKGTGSTRNGRDSRSQRLGVK).

Belongs to the bacterial ribosomal protein bL27 family.

The protein is Large ribosomal subunit protein bL27 of Crocosphaera subtropica (strain ATCC 51142 / BH68) (Cyanothece sp. (strain ATCC 51142)).